Here is a 165-residue protein sequence, read N- to C-terminus: Transcription factor zip-10 (165 aa).

A compositionally biased stretch (low complexity) spans 53-71; that stretch reads ASLGTSTTSSSRCSSTESS. Positions 53 to 99 are disordered; that stretch reads ASLGTSTTSSSRCSSTESSAAPGKIRRGRPQQEIADGQDAHSQKKRH. Positions 104-150 form a coiled coil; it reads ARQYRAQMRQKVENVKSLHDEKEQLELEVKALRQAVSGLQQENAQKD.

It localises to the nucleus. Transcription factor that regulates the expression of genes in response to changes in temperature. In particular, binds to the promoter region of genes such as asp-17 in response to severe cold to warm temperature transitions to promote gene expression. Promotes stress-induced death, particularly in older animals, following cold shock followed by warming and this may have evolved as a form of kin survival under thermal stress conditions, favoring the survival of younger animals. This is Transcription factor zip-10 from Caenorhabditis elegans.